Consider the following 127-residue polypeptide: Large ribosomal subunit protein bL12 (127 aa).

It belongs to the bacterial ribosomal protein bL12 family. Homodimer. Part of the ribosomal stalk of the 50S ribosomal subunit. Forms a multimeric L10(L12)X complex, where L10 forms an elongated spine to which 2 to 4 L12 dimers bind in a sequential fashion. Binds GTP-bound translation factors.

In terms of biological role, forms part of the ribosomal stalk which helps the ribosome interact with GTP-bound translation factors. Is thus essential for accurate translation. The sequence is that of Large ribosomal subunit protein bL12 from Rhizobium etli (strain ATCC 51251 / DSM 11541 / JCM 21823 / NBRC 15573 / CFN 42).